The chain runs to 353 residues: Uroporphyrinogen decarboxylase (353 aa).

Substrate is bound by residues 25 to 29 (RQAGR), aspartate 74, tyrosine 151, serine 206, and histidine 325.

It belongs to the uroporphyrinogen decarboxylase family. Homodimer.

The protein localises to the cytoplasm. The catalysed reaction is uroporphyrinogen III + 4 H(+) = coproporphyrinogen III + 4 CO2. The protein operates within porphyrin-containing compound metabolism; protoporphyrin-IX biosynthesis; coproporphyrinogen-III from 5-aminolevulinate: step 4/4. Its function is as follows. Catalyzes the decarboxylation of four acetate groups of uroporphyrinogen-III to yield coproporphyrinogen-III. The sequence is that of Uroporphyrinogen decarboxylase from Chloroherpeton thalassium (strain ATCC 35110 / GB-78).